The sequence spans 339 residues: MSDSPIDGSPQPEPDYRYKKDELFKRIKVTTFAQLVIQVASLSDQTLEVTAEEIQRLEDSDSATSEADTDIAAKTNGKGSPEEQSPSPVQFINSTGAGDASRSTLQSVISGVGELDVDKGLVKKEEPSGKDKPYPDCPFLLLDVRDRDSYQQCHIVGAYSYPIATLSRTMNPYSNDILEYKNAHGKIIILYDDDERLASQAATTMCERGFENLFMLSGGLKVLAQKFPEGLVTGSLPASCQQALPFGSVRKRPGPKMPALPAENKWRFTPEDLKKIECYLEADQGPANNPSRLNQNNSAGRDLKVPAGRGGQNLPTGCPTSHSNSRTLNSGHLQGKPWK.

The interval 56–99 (RLEDSDSATSEADTDIAAKTNGKGSPEEQSPSPVQFINSTGAGD) is disordered. Phosphoserine is present on residues Ser62 and Ser65. Residues 62–73 (SATSEADTDIAA) show a composition bias toward low complexity. Thr75 is subject to Phosphothreonine. 2 positions are modified to phosphoserine: Ser80 and Ser87. Positions 82–99 (EEQSPSPVQFINSTGAGD) are enriched in polar residues. In terms of domain architecture, Rhodanese spans 135–232 (PDCPFLLLDV…LAQKFPEGLV (98 aa)). The segment at 283–339 (DQGPANNPSRLNQNNSAGRDLKVPAGRGGQNLPTGCPTSHSNSRTLNSGHLQGKPWK) is disordered. Residues 286 to 299 (PANNPSRLNQNNSA) are compositionally biased toward polar residues. Arg309 is subject to Omega-N-methylarginine. The segment covering 313–332 (NLPTGCPTSHSNSRTLNSGH) has biased composition (polar residues).

Belongs to the CEP41 family. In terms of assembly, found in a complex with TTLL6.

Its subcellular location is the cytoplasm. The protein localises to the cytoskeleton. It is found in the microtubule organizing center. The protein resides in the centrosome. It localises to the cell projection. Its subcellular location is the cilium. The protein localises to the cilium basal body. Required during ciliogenesis for tubulin glutamylation in cilium. Probably acts by participating in the transport of TTLL6, a tubulin polyglutamylase, between the basal body and the cilium. This Rattus norvegicus (Rat) protein is Centrosomal protein of 41 kDa (Cep41).